Consider the following 690-residue polypeptide: Iron-regulated transcriptional activator AFT1 (690 aa).

The disordered stretch occupies residues 1–21; it reads MEGFNPADIEHASPINSSDSH. Aspartate 110 provides a ligand contact to Zn(2+). Residues lysine 111, lysine 115, isoleucine 131, glutamate 132, arginine 133, serine 134, aspartate 135, and lysine 138 each coordinate DNA. Cysteine 143 is a Zn(2+) binding site. The segment covering 148 to 159 has biased composition (basic residues); the sequence is RGRNARRKRKDK. Residues 148-205 are disordered; it reads RGRNARRKRKDKPKGQDHEDEKSKINDDELEYASPSNATVTNGPQTSPDQTSSIKPKK. Residues 160-174 show a composition bias toward basic and acidic residues; sequence PKGQDHEDEKSKIND. The segment covering 181–201 has biased composition (polar residues); sequence SPSNATVTNGPQTSPDQTSSI. Zn(2+) is bound at residue cysteine 215. Position 226 (lysine 226) interacts with DNA. Zn(2+) is bound by residues histidine 239 and histidine 241. Residue asparagine 263 coordinates DNA. Residues 291-293 carry the CDC [2Fe-2S] cluster binding motif motif; it reads CDC. Disordered regions lie at residues 335–357 and 612–655; these read PCLPSVNNTGSINTNNVRKPKSQ and SSNE…VQKD. Residues 339 to 351 show a composition bias toward polar residues; it reads SVNNTGSINTNNV. The span at 621 to 638 shows a compositional bias: low complexity; that stretch reads HQYGPQQQPPQQLQYHQN. Residues 639-649 show a composition bias toward basic and acidic residues; the sequence is QPHDGHNHEQH.

As to quaternary structure, homodimer. Dimerization decreases the DNA-binding activity.

The protein resides in the nucleus. Its activity is regulated as follows. Dimerization via the binding of Fe(2+) or a [2Fe-2S] cluster decreases the DNA-binding activity. Functionally, transcription factor that activates the genes for FRE1, FRE2 and FET3 in response to iron deprivationand thereby plays a central role in iron homeostasis. Also required for the expression of LSO1. Recognizes the consensus iron-responsive element (Fe-RE) sequence 5'-CACCC-3' in the promoters of target genes. Iron could interact directly with AFT1 and inhibits its activity. In high iron condition, the presence of Fe(2+) or [2Fe-2S] cluster leads to dimerization, which in turn leads to a decrease in DNA affinity. This is Iron-regulated transcriptional activator AFT1 from Saccharomyces cerevisiae (strain ATCC 204508 / S288c) (Baker's yeast).